The primary structure comprises 446 residues: Argininosuccinate synthase (446 aa).

Residues 17-25 (AFSGGLDTS) and A43 contribute to the ATP site. Residue Y99 participates in L-citrulline binding. ATP-binding residues include G129 and T131. The L-aspartate site is built by T131, N135, and D136. N135 serves as a coordination point for L-citrulline. Residue D136 participates in ATP binding. Residues R139 and S192 each contribute to the L-citrulline site. D194 contributes to the ATP binding site. Positions 201, 203, and 280 each coordinate L-citrulline.

Belongs to the argininosuccinate synthase family. Type 2 subfamily. Homotetramer.

The protein localises to the cytoplasm. It carries out the reaction L-citrulline + L-aspartate + ATP = 2-(N(omega)-L-arginino)succinate + AMP + diphosphate + H(+). It participates in amino-acid biosynthesis; L-arginine biosynthesis; L-arginine from L-ornithine and carbamoyl phosphate: step 2/3. This is Argininosuccinate synthase from Methylibium petroleiphilum (strain ATCC BAA-1232 / LMG 22953 / PM1).